A 154-amino-acid polypeptide reads, in one-letter code: Egg-lysin (154 aa).

Residues 1 to 18 form the signal peptide; sequence MKLLVLCIFAMMATLAMS.

As to quaternary structure, homodimer. In terms of tissue distribution, sperm.

In terms of biological role, dissolves the egg vitelline layer nonenzymatically during fertilization. It creates a hole of about 3 mu-m in diameter through which the sperm pass. This Haliotis sorenseni (White abalone) protein is Egg-lysin.